The following is a 504-amino-acid chain: MKVVNVPSNGREKFKKNWKFCVGTGRLGLALQKEYLDHLKLVQEKIGFRYIRGHGLLSDDVGIYREVEIDGEMKPFYNFTYIDRIVDSYLALNIRPFIEFGFMPKALASGDQTVFYWKGNVTPPKDYNKWRDLIVAVVSHFIERYGIEEVRTWLFEVWNEPNLVNFWKDANKQEYFKLYEVTARAVKSVDPHLQVGGPAICGGSDEWITDFLHFCAERRVPVDFVSRHAYTSKAPHKKTFEYYYQELELEPPEDMLEQFKTVRALIRQSPFPHLPLHITEYNTSYSPINPVHDTALNAAYIARILSEGGDYVDSFSYWTFSDVFEEMDVPKALFHGGFGLVALHSIPKPTFHAFTFFNALGDELLYRDGEMIVTRRKDGSIAAVLWNLVMEKGEGLTKEVQLVIPVSFSAVFIKRQIVNEQYGNAWRVWKQMGRPRFPSRQAVETLPSAQPHVMTEQRRATDGVIHLSIVLSKNEVTLIEIEQVRDETSTYVGLDDGEITSYSS.

The active-site Proton donor is the Glu160. Glu280 (nucleophile) is an active-site residue.

The protein belongs to the glycosyl hydrolase 39 family.

The enzyme catalyses Hydrolysis of (1-&gt;4)-beta-D-xylans, to remove successive D-xylose residues from the non-reducing termini.. This Geobacillus stearothermophilus (Bacillus stearothermophilus) protein is Beta-xylosidase (xynB).